A 150-amino-acid polypeptide reads, in one-letter code: Myosin, essential light chain (150 aa).

EF-hand domains follow at residues 3 to 38 and 75 to 110; these read ASAD…LGKS and EQQK…LGDY. Ca(2+) contacts are provided by aspartate 16, aspartate 18, aspartate 20, lysine 22, and aspartate 27.

Myosin is a hexamer of 2 heavy chains and 4 light chains (two regulatory light chains and two essential light chains).

This chain is Myosin, essential light chain (mlcE), found in Dictyostelium discoideum (Social amoeba).